Here is a 248-residue protein sequence, read N- to C-terminus: Protein maestro (248 aa).

Residues 1 to 20 form a disordered region; sequence MDQRQRRILGQPLSIPTSQP. HEAT repeat units lie at residues 44–79 and 128–163; these read EPLK…AREA and SFFI…AAFA.

It is found in the nucleus. The protein localises to the nucleolus. This chain is Protein maestro (MRO), found in Macaca fascicularis (Crab-eating macaque).